The following is a 495-amino-acid chain: Probable cytosol aminopeptidase (495 aa).

Residues Lys258 and Asp263 each coordinate Mn(2+). Lys270 is a catalytic residue. Residues Asp281, Asp340, and Glu342 each contribute to the Mn(2+) site. Residue Arg344 is part of the active site.

This sequence belongs to the peptidase M17 family. Mn(2+) is required as a cofactor.

The protein resides in the cytoplasm. The enzyme catalyses Release of an N-terminal amino acid, Xaa-|-Yaa-, in which Xaa is preferably Leu, but may be other amino acids including Pro although not Arg or Lys, and Yaa may be Pro. Amino acid amides and methyl esters are also readily hydrolyzed, but rates on arylamides are exceedingly low.. It catalyses the reaction Release of an N-terminal amino acid, preferentially leucine, but not glutamic or aspartic acids.. Presumably involved in the processing and regular turnover of intracellular proteins. Catalyzes the removal of unsubstituted N-terminal amino acids from various peptides. This Leptospira interrogans serogroup Icterohaemorrhagiae serovar copenhageni (strain Fiocruz L1-130) protein is Probable cytosol aminopeptidase.